A 255-amino-acid polypeptide reads, in one-letter code: MFKVDLNSDLGESFGAYKMGMDEEILKFVSSVNVACGFHAGDPCVMDKTLNLAKQNGVCIGAHPSYPDLLGFGRRNMQISFEEAKNYALYQLGALFGFAKAKDMKIQHFKAHGALYNMAAIDENLALALCEAVASFDENIIFLGLSNSAMNEAAKKKGLKYANEVFADRAYNDDGTLVSRKLEGALIHDENLAIKRVIKMIKESKVTSINGKEIDLKADSICVHGDNVKALEFVKKIKENLEKEQIQICALENFI.

It belongs to the LamB/PxpA family. Forms a complex composed of PxpA, PxpB and PxpC.

It catalyses the reaction 5-oxo-L-proline + ATP + 2 H2O = L-glutamate + ADP + phosphate + H(+). In terms of biological role, catalyzes the cleavage of 5-oxoproline to form L-glutamate coupled to the hydrolysis of ATP to ADP and inorganic phosphate. This is 5-oxoprolinase subunit A from Campylobacter jejuni subsp. doylei (strain ATCC BAA-1458 / RM4099 / 269.97).